The following is a 119-amino-acid chain: MSLLEAFAFSSWALGLGLSKVEQFQLSISTEVKKSIDIPCKISSTRFETDVIHWYRQKPNQALEHLIYIVSTKSAARRSMGKTSNKVEARKNSQTLTSILTIKSVEKEDMAVYYCAAWD.

The first 19 residues, 1–19 (MSLLEAFAFSSWALGLGLS), serve as a signal peptide directing secretion. Residues 24–119 (FQLSISTEVK…MAVYYCAAWD (96 aa)) form the Ig-like domain. A disulfide bridge links C40 with C115.

As to quaternary structure, gamma-delta TR is a heterodimer composed of a gamma and delta chain; disulfide-linked. The gamma-delta TR is associated with the transmembrane signaling CD3 coreceptor proteins following the stoichiometry: a single gamma-delta TR heterodimer associates with one CD3D-CD3E heterodimer, one CD3G-CD3E heterodimer and one CD247 homodimer forming a stable octameric structure. Upon activation, gamma-delta TR complex associates with FCER1G to initiate intracellular signaling.

It localises to the cell membrane. Probable non-functional open reading frame (ORF) of V region of the variable domain of T cell receptor (TR) gamma chain. Non-functional ORF generally cannot participate in the synthesis of a productive T cell receptor (TR) chain due to altered V-(D)-J or switch recombination and/or splicing site (at mRNA level) and/or conserved amino acid change (protein level). Gamma-delta TRs recognize a variety of self and foreign non-peptide antigens frequently expressed at the epithelial boundaries between the host and external environment, including endogenous lipids presented by MH-like protein CD1D and phosphoantigens presented by butyrophilin-like molecule BTN3A1. Upon antigen recognition induces rapid, innate-like immune responses involved in pathogen clearance and tissue repair. Binding of gamma-delta TR complex to antigen triggers phosphorylation of immunoreceptor tyrosine-based activation motifs (ITAMs) in the CD3 chains by the LCK and FYN kinases, allowing the recruitment, phosphorylation, and activation of ZAP70 that facilitates phosphorylation of the scaffolding proteins LCP2 and LAT. This lead to the formation of a supramolecular signalosome that recruits the phospholipase PLCG1, resulting in calcium mobilization and ERK activation, ultimately leading to T cell expansion and differentiation into effector cells. Gamma-delta TRs are produced through somatic rearrangement of a limited repertoire of variable (V), diversity (D), and joining (J) genes. The potential diversity of gamma-delta TRs is conferred by the unique ability to rearrange (D) genes in tandem and to utilize all three reading frames. The combinatorial diversity is considerably increased by the sequence exonuclease trimming and random nucleotide (N) region additions which occur during the V-(D)-J rearrangements. This chain is Probable non-functional T cell receptor gamma variable 10, found in Homo sapiens (Human).